The following is a 661-amino-acid chain: UvrABC system protein C (661 aa).

The GIY-YIG domain occupies 26–105 (AEPGCYLMRD…IKNHQPHFNV (80 aa)). The region spanning 215–250 (DELQNLLQEQMHKYADRTDYESAARVRDQLQGLDQL) is the UVR domain.

The protein belongs to the UvrC family. In terms of assembly, interacts with UvrB in an incision complex.

It localises to the cytoplasm. Functionally, the UvrABC repair system catalyzes the recognition and processing of DNA lesions. UvrC both incises the 5' and 3' sides of the lesion. The N-terminal half is responsible for the 3' incision and the C-terminal half is responsible for the 5' incision. This chain is UvrABC system protein C, found in Synechococcus sp. (strain CC9902).